Here is a 707-residue protein sequence, read N- to C-terminus: Polyribonucleotide nucleotidyltransferase (707 aa).

Residues Asp-486 and Asp-492 each coordinate Mg(2+). A KH domain is found at 553 to 612 (PRIHTIKINPEKIKDVIGKGGSVIRALTEETGTTIEIEDDGTVKIAATDGDKAKHAIRRI). The S1 motif domain occupies 622-690 (GRIYQGKVTR…RQGRVRLSIK (69 aa)).

Belongs to the polyribonucleotide nucleotidyltransferase family. In terms of assembly, component of the RNA degradosome, which is a multiprotein complex involved in RNA processing and mRNA degradation. It depends on Mg(2+) as a cofactor.

Its subcellular location is the cytoplasm. The catalysed reaction is RNA(n+1) + phosphate = RNA(n) + a ribonucleoside 5'-diphosphate. Its function is as follows. Involved in mRNA degradation. Catalyzes the phosphorolysis of single-stranded polyribonucleotides processively in the 3'- to 5'-direction. The protein is Polyribonucleotide nucleotidyltransferase of Edwardsiella ictaluri (strain 93-146).